We begin with the raw amino-acid sequence, 248 residues long: Triosephosphate isomerase (248 aa).

Substrate is bound by residues Asn-10 and Lys-12. His-95 serves as the catalytic Electrophile. Glu-165 functions as the Proton acceptor in the catalytic mechanism.

This sequence belongs to the triosephosphate isomerase family. Homodimer.

It catalyses the reaction D-glyceraldehyde 3-phosphate = dihydroxyacetone phosphate. The protein operates within carbohydrate biosynthesis; gluconeogenesis. Its pathway is carbohydrate degradation; glycolysis; D-glyceraldehyde 3-phosphate from glycerone phosphate: step 1/1. This is Triosephosphate isomerase (TPI1) from Eremothecium gossypii (strain ATCC 10895 / CBS 109.51 / FGSC 9923 / NRRL Y-1056) (Yeast).